The following is a 76-amino-acid chain: Lividin-2 (76 aa).

The N-terminal stretch at 1-22 is a signal peptide; sequence MFTLKKSLLLLFFLGTISLSLC. The propeptide occupies 23–41; the sequence is QEERNADEEDGGEVTEEEV. A disulfide bridge links C70 with C76.

Expressed by the skin glands.

Its subcellular location is the secreted. In terms of biological role, antimicrobial peptide. The protein is Lividin-2 of Odorrana livida (Green mountain frog).